The sequence spans 159 residues: NADH-quinone oxidoreductase subunit B (159 aa).

4 residues coordinate [4Fe-4S] cluster: Cys32, Cys33, Cys97, and Cys126.

Belongs to the complex I 20 kDa subunit family. As to quaternary structure, NDH-1 is composed of 14 different subunits. Subunits NuoB, C, D, E, F, and G constitute the peripheral sector of the complex. The cofactor is [4Fe-4S] cluster.

The protein localises to the cell inner membrane. The enzyme catalyses a quinone + NADH + 5 H(+)(in) = a quinol + NAD(+) + 4 H(+)(out). Its function is as follows. NDH-1 shuttles electrons from NADH, via FMN and iron-sulfur (Fe-S) centers, to quinones in the respiratory chain. The immediate electron acceptor for the enzyme in this species is believed to be ubiquinone. Couples the redox reaction to proton translocation (for every two electrons transferred, four hydrogen ions are translocated across the cytoplasmic membrane), and thus conserves the redox energy in a proton gradient. The chain is NADH-quinone oxidoreductase subunit B from Helicobacter pylori (strain P12).